We begin with the raw amino-acid sequence, 93 residues long: MDGIKYAVFTDKSIRLLGNNQYTSNVESGSTRTEIKHWVELFFGVKVIAMNSHRLPGKGRRMGPIMGHTMHYRRMIITLQPGYSIPPLRKKRT.

It belongs to the universal ribosomal protein uL23 family. In terms of assembly, part of the 50S ribosomal subunit.

It localises to the plastid. It is found in the chloroplast. Functionally, binds to 23S rRNA. This is Large ribosomal subunit protein uL23cz/uL23cy (rpl23-A) from Nandina domestica (Heavenly bamboo).